Consider the following 348-residue polypeptide: MKLKKIIPAFPLLSTVAVGLWLTPTQASADAADTMVDISGKKVLVGYWHNWASKGRDGYKQGTSASLNLSEVNQAYNVVPVSFMKSDGTTRIPTFKPYNQTDTAFRQEVAQLNSQGRAVLLALGGADAHIQLVKGDEQAFANEIIRQVETYGFDGLDIDLEQLAITAGDNQTVIPATLKIVKDHYRAQGKNFIITMAPEFPYLKPGAAYETYITSLNGYYDYIAPQLYNQGGDGVWVDEIMTWVAQSNDALKYEFLYYMSDSLIHGTRGYLQIPNDKLVLGLPANRDAAGSGYVVEATPVAKTFDQLAKDGNPIRGLMTWSANWDVGQDVNGKSYNNEFATRYSNLVK.

An N-terminal signal peptide occupies residues 1–29 (MKLKKIIPAFPLLSTVAVGLWLTPTQASA). The GH18 domain occupies 42 to 348 (KVLVGYWHNW…FATRYSNLVK (307 aa)). The Proton donor role is filled by Glu161.

It belongs to the glycosyl hydrolase 18 family.

The protein resides in the secreted. It catalyses the reaction Random endo-hydrolysis of N-acetyl-beta-D-glucosaminide (1-&gt;4)-beta-linkages in chitin and chitodextrins.. The protein operates within glycan degradation; chitin degradation. In terms of biological role, involved in chitin degradation. Catalyzes the cleavage of glycosidic linkages in chitooligosaccharides and in alpha- and beta-chitin. Its activity on chitooligosaccharides increases considerably with degrees of polymerization (the initial rate of hydrolysis for GlcNAc5 is about 130-fold higher than that for GlcNAc3). Its activity is greatly stimulated in the presence of the lytic chitin monooxygenase EfCBM33A, which attacks the crystalline structure of chitin and makes the polymer more accessible to the chitinase; combining the two enzymes leads to rapid and complete depolymerization of crystalline chitin, especially with beta-chitin as a substrate. Is likely involved in a chitin degradation pathway that allows E.faecalis V583 to grow on chitin as a carbon source. This is Chitinase from Enterococcus faecalis (strain ATCC 700802 / V583).